Reading from the N-terminus, the 277-residue chain is Putative phosphoenolpyruvate synthase regulatory protein (277 aa).

ADP is bound at residue 157–164 (GVSRCGKT).

The protein belongs to the pyruvate, phosphate/water dikinase regulatory protein family. PSRP subfamily.

The enzyme catalyses [pyruvate, water dikinase] + ADP = [pyruvate, water dikinase]-phosphate + AMP + H(+). The catalysed reaction is [pyruvate, water dikinase]-phosphate + phosphate + H(+) = [pyruvate, water dikinase] + diphosphate. Functionally, bifunctional serine/threonine kinase and phosphorylase involved in the regulation of the phosphoenolpyruvate synthase (PEPS) by catalyzing its phosphorylation/dephosphorylation. This is Putative phosphoenolpyruvate synthase regulatory protein from Enterobacter sp. (strain 638).